We begin with the raw amino-acid sequence, 382 residues long: Sulfate adenylyltransferase (382 aa).

The protein belongs to the sulfate adenylyltransferase family.

The catalysed reaction is sulfate + ATP + H(+) = adenosine 5'-phosphosulfate + diphosphate. It participates in sulfur metabolism; hydrogen sulfide biosynthesis; sulfite from sulfate: step 1/3. This Ignicoccus hospitalis (strain KIN4/I / DSM 18386 / JCM 14125) protein is Sulfate adenylyltransferase.